A 277-amino-acid polypeptide reads, in one-letter code: Bis(5'-nucleosyl)-tetraphosphatase, symmetrical (277 aa).

The protein belongs to the Ap4A hydrolase family.

It carries out the reaction P(1),P(4)-bis(5'-adenosyl) tetraphosphate + H2O = 2 ADP + 2 H(+). Functionally, hydrolyzes diadenosine 5',5'''-P1,P4-tetraphosphate to yield ADP. In Chromobacterium violaceum (strain ATCC 12472 / DSM 30191 / JCM 1249 / CCUG 213 / NBRC 12614 / NCIMB 9131 / NCTC 9757 / MK), this protein is Bis(5'-nucleosyl)-tetraphosphatase, symmetrical.